The following is a 1046-amino-acid chain: UDP-N-acetylglucosamine--peptide N-acetylglucosaminyltransferase 110 kDa subunit (1046 aa).

Position 2 is an N-acetylalanine (A2). S3 and S4 each carry phosphoserine; by GSK3-beta; alternate. Residues S3 and S4 are each glycosylated (O-linked (GlcNAc) serine; alternate). An O-linked (GlcNAc) serine glycan is attached at D10. T12 carries O-linked (GlcNAc) threonine glycosylation. M18 carries O-linked (GlcNAc) serine glycosylation. A Phosphoserine modification is found at S20. The TPR 1 repeat unit spans residues 21-54 (FQGLAELAHREYQAGDFEAAERHCMQLWRQEPDN). E38 is a glycosylation site (O-linked (GlcNAc) threonine). Residues P52 and G56 are each glycosylated (O-linked (GlcNAc) serine). 11 TPR repeats span residues 89-122 (AEAY…KPDF), 123-156 (IDGY…NPDL), 157-190 (YCVR…QPNF), 191-224 (AVAW…DPNF), 225-258 (LDAY…SPNH), 259-292 (AVVH…QPHF), 293-326 (PDAY…CPTH), 327-360 (ADSL…FPEF), 361-394 (AAAH…SPTF), 395-428 (ADAY…NPAF), and 429-462 (ADAH…KPDF). O-linked (GlcNAc) serine; by autocatalysis glycosylation is present at S399. The residue at position 454 (T454) is a Phosphothreonine; by AMPK. One copy of the TPR 13; truncated repeat lies at 463-473 (PDAYCNLAHCL). The short motif at 464 to 466 (DAY) is the DFP motif element. The Nuclear localization signal motif lies at 487–503 (KKLVSIVADQLEKNRLP). The active-site Proton acceptor is H508. UDP-binding positions include Q849, K852, 906–908 (APK), 911–914 (HVRR), 930–932 (HTT), and D935. At Y989 the chain carries Phosphotyrosine. The segment at 991-1010 (KKVRGKVWKQRISSPLFNTK) is required for phosphatidylinositol 3,4,5-triphosphate binding.

It belongs to the glycosyltransferase 41 family. O-GlcNAc transferase subfamily. In terms of assembly, monomer; may exist in different oligomerization states in cells. Homotrimer, oligomerizes via TPR repeats 6 and 7. Trimerization is not necessary for activity in vitro, however it increases affinity for UDP-GlcNAc. Component of a THAP1/THAP3-HCFC1-OGT complex. Component of the NSL complex at least composed of MOF/KAT8, KANSL1, KANSL2, KANSL3, MCRS1, PHF20, OGT1/OGT, WDR5 and HCFC1. Found in a complex with KIF5B, RHOT1, RHOT2 and TRAK1. Found in a complex composed of at least SINHCAF, SIN3A, HDAC1, SAP30, RBBP4, OGT and TET1. Component of a complex composed of KMT2E/MLL5 (isoform 3), OGT (isoform 1) and USP7; the complex stabilizes KMT2E/MLL5, preventing KMT2E/MLL5 ubiquitination and proteasomal-mediated degradation. Interacts (via TPRs 1-6) with SIN3A; the interaction mediates transcriptional repression in parallel with histone deacetylase. Interacts (via TPR 5-6) with TET1, TET2 and TET3. Interacts (via TPR repeats 6 and 7) with ATXN10. Interacts with NSD2. Interacts with PROSER1; this interaction mediates TET2 O-GlcNAcylation and stability by promoting the interaction between OGT and TET2. Interacts with USP7. As to quaternary structure, (Microbial infection) Interacts with human T-cell leukemia virus 1/HTLV-1 protein Tax; this interaction increases Tax interacting partner CREB1 O-GlcNAcylation. Ubiquitinated by the SCF(FBXO31) complex, leading to its proteasomal degradation. In terms of processing, phosphorylation on Ser-3 or Ser-4 by GSK3-beta positively regulates its activity. Phosphorylation at Thr-454 by AMPK promotes nuclear localization. Post-translationally, glycosylated via autocatalysis; O-GlcNAcylation at Ser-399 promotes nuclear localization. Glycosylated via autocatalysis; does not affect the enzyme activity but regulates substrate selectivity. Highly expressed in pancreas and to a lesser extent in skeletal muscle, heart, brain and placenta. Present in trace amounts in lung and liver.

The protein localises to the nucleus. It is found in the cytoplasm. The protein resides in the mitochondrion. Its subcellular location is the membrane. It localises to the cell membrane. The protein localises to the mitochondrion membrane. It is found in the cell projection. The enzyme catalyses L-seryl-[protein] + UDP-N-acetyl-alpha-D-glucosamine = 3-O-(N-acetyl-beta-D-glucosaminyl)-L-seryl-[protein] + UDP + H(+). The catalysed reaction is L-threonyl-[protein] + UDP-N-acetyl-alpha-D-glucosamine = 3-O-(N-acetyl-beta-D-glucosaminyl)-L-threonyl-[protein] + UDP + H(+). It functions in the pathway protein modification; protein glycosylation. Subject to product inhibition by UDP. Functionally, catalyzes the transfer of a single N-acetylglucosamine from UDP-GlcNAc to a serine or threonine residue in cytoplasmic and nuclear proteins resulting in their modification with a beta-linked N-acetylglucosamine (O-GlcNAc). Glycosylates a large and diverse number of proteins including histone H2B, AKT1, AMPK, ATG4B, CAPRIN1, EZH2, FNIP1, GSDMD, KRT7, LMNA, LMNB1, LMNB2, RPTOR, HOXA1, PFKL, KMT2E/MLL5, MAPT/TAU, TET2, RBL2, RET, NOD2 and HCFC1. Can regulate their cellular processes via cross-talk between glycosylation and phosphorylation or by affecting proteolytic processing. Involved in insulin resistance in muscle and adipocyte cells via glycosylating insulin signaling components and inhibiting the 'Thr-308' phosphorylation of AKT1, enhancing IRS1 phosphorylation and attenuating insulin signaling. Involved in glycolysis regulation by mediating glycosylation of 6-phosphofructokinase PFKL, inhibiting its activity. Plays a key role in chromatin structure by mediating O-GlcNAcylation of 'Ser-112' of histone H2B: recruited to CpG-rich transcription start sites of active genes via its interaction with TET proteins (TET1, TET2 or TET3). As part of the NSL complex indirectly involved in acetylation of nucleosomal histone H4 on several lysine residues. O-GlcNAcylation of 'Ser-75' of EZH2 increases its stability, and facilitating the formation of H3K27me3 by the PRC2/EED-EZH2 complex. Stabilizes KMT2E/MLL5 by mediating its glycosylation, thereby preventing KMT2E/MLL5 ubiquitination. Regulates circadian oscillation of the clock genes and glucose homeostasis in the liver. Stabilizes clock proteins BMAL1 and CLOCK through O-glycosylation, which prevents their ubiquitination and subsequent degradation. Promotes the CLOCK-BMAL1-mediated transcription of genes in the negative loop of the circadian clock such as PER1/2 and CRY1/2. O-glycosylates HCFC1 and regulates its proteolytic processing and transcriptional activity. Component of a THAP1/THAP3-HCFC1-OGT complex that is required for the regulation of the transcriptional activity of RRM1. Regulates mitochondrial motility in neurons by mediating glycosylation of TRAK1. Promotes autophagy by mediating O-glycosylation of ATG4B. Acts as a regulator of mTORC1 signaling by mediating O-glycosylation of RPTOR and FNIP1: O-GlcNAcylation of RPTOR in response to glucose sufficiency promotes activation of the mTORC1 complex. Its function is as follows. The mitochondrial isoform (mOGT) is cytotoxic and triggers apoptosis in several cell types including INS1, an insulinoma cell line. In terms of biological role, has N-acetylglucosaminyltransferase activity: glycosylates proteins, such as HNRNPU, NEUROD1, NUP62 and PDCD6IP. Displays specific substrate selectivity compared to other isoforms. The protein is UDP-N-acetylglucosamine--peptide N-acetylglucosaminyltransferase 110 kDa subunit of Homo sapiens (Human).